A 160-amino-acid chain; its full sequence is MPAFDIVSEVDNVELKNAVDNATRELATRFDFRGVDASFELKGENIKIKAEDDFQLTQLVDILRGNLAKRGVDARSMDVKDAVHSGKNFYQDIDFKQGIDPLISKKLVKEIKASKVKVQAAIQGEQLRITGKNRDDLQAAMAIVREGDFGQPFQFTNFRD.

Belongs to the YajQ family.

Nucleotide-binding protein. This is Nucleotide-binding protein VSAL_I1728 from Aliivibrio salmonicida (strain LFI1238) (Vibrio salmonicida (strain LFI1238)).